A 114-amino-acid chain; its full sequence is Large ribosomal subunit protein bL19 (114 aa).

Belongs to the bacterial ribosomal protein bL19 family.

This protein is located at the 30S-50S ribosomal subunit interface and may play a role in the structure and function of the aminoacyl-tRNA binding site. The polypeptide is Large ribosomal subunit protein bL19 (Heliobacterium modesticaldum (strain ATCC 51547 / Ice1)).